The chain runs to 234 residues: Proteasome subunit alpha (234 aa).

It belongs to the peptidase T1A family. In terms of assembly, the 20S proteasome core is composed of 14 alpha and 14 beta subunits that assemble into four stacked heptameric rings, resulting in a barrel-shaped structure. The two inner rings, each composed of seven catalytic beta subunits, are sandwiched by two outer rings, each composed of seven alpha subunits. The catalytic chamber with the active sites is on the inside of the barrel. Has a gated structure, the ends of the cylinder being occluded by the N-termini of the alpha-subunits. Is capped by the proteasome-associated ATPase, ARC.

It is found in the cytoplasm. It participates in protein degradation; proteasomal Pup-dependent pathway. With respect to regulation, the formation of the proteasomal ATPase ARC-20S proteasome complex, likely via the docking of the C-termini of ARC into the intersubunit pockets in the alpha-rings, may trigger opening of the gate for substrate entry. Interconversion between the open-gate and close-gate conformations leads to a dynamic regulation of the 20S proteasome proteolysis activity. Functionally, component of the proteasome core, a large protease complex with broad specificity involved in protein degradation. The protein is Proteasome subunit alpha of Acidothermus cellulolyticus (strain ATCC 43068 / DSM 8971 / 11B).